A 469-amino-acid chain; its full sequence is Glutamine synthetase (469 aa).

The GS beta-grasp domain occupies 15–96 (NDVKFIDVRF…INFFIHDPIT (82 aa)). Residues 104–469 (PRNIAKKAEA…PHEFELYFDI (366 aa)) enclose the GS catalytic domain. The Mg(2+) site is built by Glu129 and Glu131. Glu205 contributes to the ATP binding site. Mg(2+)-binding residues include Glu210 and Glu218. 221–223 (YKF) contributes to the ATP binding site. L-glutamate is bound by residues 262–263 (NG) and Gly263. His267 provides a ligand contact to Mg(2+). Residues 269–271 (HQS) and Ser271 each bind ATP. L-glutamate is bound by residues Arg320, Glu326, and Arg338. ATP is bound by residues Arg338, Arg343, and Lys352. Glu357 is a binding site for Mg(2+). An L-glutamate-binding site is contributed by Arg359. Tyr397 bears the O-AMP-tyrosine mark.

Belongs to the glutamine synthetase family. Oligomer of 12 subunits arranged in the form of two hexagons. The cofactor is Mg(2+).

The protein resides in the cytoplasm. It carries out the reaction L-glutamate + NH4(+) + ATP = L-glutamine + ADP + phosphate + H(+). The activity of this enzyme could be controlled by adenylation under conditions of abundant glutamine. Catalyzes the ATP-dependent biosynthesis of glutamine from glutamate and ammonia. The protein is Glutamine synthetase of Streptomyces filamentosus (Streptomyces roseosporus).